The chain runs to 348 residues: Adenosine deaminase (348 aa).

Residues His-16 and His-18 each contribute to the Zn(2+) site. Substrate is bound by residues His-18, Asp-20, and Gly-174. His-201 contributes to the Zn(2+) binding site. Glu-204 serves as the catalytic Proton donor. Residue Asp-282 coordinates Zn(2+).

It belongs to the metallo-dependent hydrolases superfamily. Adenosine and AMP deaminases family. Adenosine deaminase subfamily. Zn(2+) is required as a cofactor.

The catalysed reaction is adenosine + H2O + H(+) = inosine + NH4(+). The enzyme catalyses 2'-deoxyadenosine + H2O + H(+) = 2'-deoxyinosine + NH4(+). Functionally, catalyzes the hydrolytic deamination of adenosine and 2-deoxyadenosine. This Clostridium kluyveri (strain ATCC 8527 / DSM 555 / NBRC 12016 / NCIMB 10680 / K1) protein is Adenosine deaminase.